Reading from the N-terminus, the 358-residue chain is Testis-specific serine/threonine-protein kinase 2 (358 aa).

The Protein kinase domain maps to 12–272; sequence YIVGINLGKG…IDEILSHSWL (261 aa). ATP-binding positions include 18–26 and K41; that span reads LGKGSYAKV. Catalysis depends on D136, which acts as the Proton acceptor. Basic and acidic residues-rich tracts occupy residues 296–315 and 329–358; these read DCKL…DHKL and NEDR…KAST. Residues 296-358 are disordered; it reads DCKLDTRPGS…SGAEVEKAST (63 aa).

Belongs to the protein kinase superfamily. CAMK Ser/Thr protein kinase family. Interacts with TSSK1B. Interacts with HSP90; this interaction stabilizes TSSK2. The cofactor is Mg(2+). In terms of processing, autophosphorylated. Ubiquitinated; HSP90 activity negatively regulates ubiquitination and degradation. In terms of tissue distribution, testis-specific. Expressed only in the spermatids postmeiotically at the final stages of cytodifferentiation in the seminiferous tubules (at protein level). Not detected in released sperms in the lumen of the seminiferous tubules. Also present in the epididymal sperm (at protein level).

It localises to the cytoplasm. The protein resides in the cytoskeleton. Its subcellular location is the microtubule organizing center. It is found in the centrosome. The protein localises to the centriole. It localises to the cytoplasmic vesicle. The protein resides in the secretory vesicle. Its subcellular location is the acrosome. The enzyme catalyses L-seryl-[protein] + ATP = O-phospho-L-seryl-[protein] + ADP + H(+). It catalyses the reaction L-threonyl-[protein] + ATP = O-phospho-L-threonyl-[protein] + ADP + H(+). Its activity is regulated as follows. Activated by phosphorylation on Thr-174, potentially by autophosphorylation. Functionally, testis-specific serine/threonine-protein kinase required during spermatid development. Phosphorylates 'Ser-281' of TSKS and SPAG16. Involved in the late stages of spermatogenesis, during the reconstruction of the cytoplasm. During spermatogenesis, required for the transformation of a ring-shaped structure around the base of the flagellum originating from the chromatoid body. The polypeptide is Testis-specific serine/threonine-protein kinase 2 (Tssk2) (Mus musculus (Mouse)).